Consider the following 216-residue polypeptide: 3-isopropylmalate dehydratase small subunit 2 (216 aa).

This sequence belongs to the LeuD family. LeuD type 1 subfamily. Heterodimer of LeuC and LeuD.

The enzyme catalyses (2R,3S)-3-isopropylmalate = (2S)-2-isopropylmalate. Its pathway is amino-acid biosynthesis; L-leucine biosynthesis; L-leucine from 3-methyl-2-oxobutanoate: step 2/4. Catalyzes the isomerization between 2-isopropylmalate and 3-isopropylmalate, via the formation of 2-isopropylmaleate. This Bordetella pertussis (strain Tohama I / ATCC BAA-589 / NCTC 13251) protein is 3-isopropylmalate dehydratase small subunit 2.